A 263-amino-acid polypeptide reads, in one-letter code: METLLHSEILKKYKEETNEYIKKKNVEKLFDIILKNVLINKPDNIYLYIYNNIYSFLLNKIFIMGPPVLKITSMLSSHISEFFNYYHISLPILIQQYKLNKGESSNNKIIVNDEIISFILKENIHNLDSKKKKGYIVEGYPNNNLQAYSCLKYLPSHVFVLYADEEYIYKKYEEENDIAIFSYTQKKDYDINEPHEINNIDVKPLKDQVLSYIRNISDMLTILGTNKKVLNLHDFNDQMLIDHVKNEVSKNKDEWDSTLNGDI.

Belongs to the adenylate kinase family.

It localises to the cytoplasm. In terms of biological role, lacks adenylate kinase activity. The polypeptide is Inactive adenylate kinase (Plasmodium falciparum (isolate 3D7)).